A 530-amino-acid chain; its full sequence is UDP-glucuronosyltransferase 2B15 (530 aa).

An N-terminal signal peptide occupies residues 1–23 (MSLKWTSVFLLIQLSCYFSSGSC). N-linked (GlcNAc...) asparagine glycosylation occurs at Asn-65. Residue Lys-136 is modified to N6-succinyllysine. 2 N-linked (GlcNAc...) asparagine glycosylation sites follow: Asn-316 and Asn-483. The chain crosses the membrane as a helical span at residues 495 to 515 (IAFLLACVATVIFIITKFCLF).

Belongs to the UDP-glycosyltransferase family. As to expression, expressed in many tissues. Present in liver, prostate and testis.

It is found in the endoplasmic reticulum membrane. The enzyme catalyses glucuronate acceptor + UDP-alpha-D-glucuronate = acceptor beta-D-glucuronoside + UDP + H(+). It carries out the reaction 17alpha-estradiol + UDP-alpha-D-glucuronate = 17alpha-estradiol 3-O-(beta-D-glucuronate) + UDP + H(+). The catalysed reaction is 16alpha,17alpha-estriol + UDP-alpha-D-glucuronate = 16alpha,17alpha-estriol 3-O-(beta-D-glucuronate) + UDP + H(+). It catalyses the reaction 17beta-hydroxy-5alpha-androstan-3-one + UDP-alpha-D-glucuronate = 5alpha-dihydrotestosterone 17-O-(beta-D-glucuronate) + UDP + H(+). UDP-glucuronosyltransferase (UGT) that catalyzes phase II biotransformation reactions in which lipophilic substrates are conjugated with glucuronic acid to increase the metabolite's water solubility, thereby facilitating excretion into either the urine or bile. Essential for the elimination and detoxification of drugs, xenobiotics and endogenous compounds. Catalyzes the glucuronidation of endogenous steroid hormones such as androgens (testosterone, androsterone) and estrogens (estradiol, epiestradiol, estriol, catechol estrogens). Displays glucuronidation activity toward several classes of xenobiotic substrates, including phenolic compounds (eugenol, 4-nitrophenol, 4-hydroxybiphenyl) and phenylpropanoids (naringenin, coumarins). Catalyzes the glucuronidation of monoterpenoid alcohols such as borneol, menthol and isomenthol, a class of natural compounds used in essential oils. The polypeptide is UDP-glucuronosyltransferase 2B15 (Homo sapiens (Human)).